The chain runs to 209 residues: Ribosome maturation factor RimP (209 aa).

It belongs to the RimP family.

The protein localises to the cytoplasm. Required for maturation of 30S ribosomal subunits. The sequence is that of Ribosome maturation factor RimP from Bartonella bacilliformis (strain ATCC 35685 / KC583 / Herrer 020/F12,63).